The primary structure comprises 358 residues: Neutral protease 2 homolog MGYG_02351 (358 aa).

The signal sequence occupies residues 1–17; it reads MQFVALLAALGAPLALA. Residues 18–183 constitute a propeptide that is removed on maturation; it reads ASIPAAHNNS…DSPAGVIDKR (166 aa). 2 disulfide bridges follow: C191–C260 and C267–C285. H309 provides a ligand contact to Zn(2+). Residue E310 is part of the active site. The Zn(2+) site is built by H313 and D324.

Belongs to the peptidase M35 family. Requires Zn(2+) as cofactor.

It is found in the secreted. It carries out the reaction Preferential cleavage of bonds with hydrophobic residues in P1'. Also 3-Asn-|-Gln-4 and 8-Gly-|-Ser-9 bonds in insulin B chain.. In terms of biological role, secreted metalloproteinase that allows assimilation of proteinaceous substrates. Shows high activities on basic nuclear substrates such as histone and protamine. May be involved in virulence. In Arthroderma gypseum (strain ATCC MYA-4604 / CBS 118893) (Microsporum gypseum), this protein is Neutral protease 2 homolog MGYG_02351.